The following is a 66-amino-acid chain: Transmembrane protein B66L (66 aa).

An N-terminal signal peptide occupies residues 1–20 (MDIKRALILFLLFLVVLSNA). Residues 21–40 (FVDYIISNFNHAVTCRKPTY) are Extracellular-facing. The chain crosses the membrane as a helical span at residues 41–61 (FGIVLQGIFLVILFSIVDYLI). Residues 62-66 (NENIL) lie on the Cytoplasmic side of the membrane.

Belongs to the asfivirus B66L family.

The protein localises to the host membrane. This is Transmembrane protein B66L from Ornithodoros (relapsing fever ticks).